Reading from the N-terminus, the 183-residue chain is Ubiquinol-cytochrome c reductase iron-sulfur subunit (183 aa).

The helical transmembrane segment at Leu-21–Ile-41 threads the bilayer. The Rieske domain maps to Ile-88–Leu-181. Cys-121, His-123, Cys-145, and His-148 together coordinate [2Fe-2S] cluster. A disulfide bridge links Cys-126 with Cys-147.

This sequence belongs to the Rieske iron-sulfur protein family. In terms of assembly, the main subunits of complex b-c1 are: cytochrome b, cytochrome c1 and the Rieske protein. The cofactor is [2Fe-2S] cluster.

The protein resides in the cell inner membrane. It catalyses the reaction a quinol + 2 Fe(III)-[cytochrome c](out) = a quinone + 2 Fe(II)-[cytochrome c](out) + 2 H(+)(out). Functionally, component of the ubiquinol-cytochrome c reductase complex (complex III or cytochrome b-c1 complex), which is a respiratory chain that generates an electrochemical potential coupled to ATP synthesis. The polypeptide is Ubiquinol-cytochrome c reductase iron-sulfur subunit (petA) (Rhodospirillum rubrum).